Consider the following 132-residue polypeptide: Ribosome-binding factor A (132 aa).

This sequence belongs to the RbfA family. In terms of assembly, monomer. Binds 30S ribosomal subunits, but not 50S ribosomal subunits or 70S ribosomes.

It localises to the cytoplasm. One of several proteins that assist in the late maturation steps of the functional core of the 30S ribosomal subunit. Associates with free 30S ribosomal subunits (but not with 30S subunits that are part of 70S ribosomes or polysomes). Required for efficient processing of 16S rRNA. May interact with the 5'-terminal helix region of 16S rRNA. The polypeptide is Ribosome-binding factor A (Prochlorococcus marinus (strain MIT 9515)).